The chain runs to 344 residues: 4'-phosphopantetheinyl transferase NpgA (344 aa).

The protein belongs to the P-Pant transferase superfamily.

The catalysed reaction is apo-[ACP] + CoA = holo-[ACP] + adenosine 3',5'-bisphosphate + H(+). Its function is as follows. Transfers the 4'-phosphopantetheine moiety from coenzyme A to a Ser of an acyl-carrier-protein. The enzyme is able to transfer the cofactor to a broad range of enzymes with acyl- or peptidyl-carrier protein domains. Required for primary biological processes such as growth and asexual/sexual development, and activates target enzymes involved in the synthesis of metabolites such as fatty acids, polyketides and nonribosomal peptides, lysine, siderophore, penicillin, sterigmatocystin, shamixantone, dehydroaustinol, and pigments. This chain is 4'-phosphopantetheinyl transferase NpgA (npgA), found in Emericella nidulans (strain FGSC A4 / ATCC 38163 / CBS 112.46 / NRRL 194 / M139) (Aspergillus nidulans).